Reading from the N-terminus, the 182-residue chain is Ribosome-recycling factor (182 aa).

Belongs to the RRF family.

The protein localises to the cytoplasm. Its function is as follows. Responsible for the release of ribosomes from messenger RNA at the termination of protein biosynthesis. May increase the efficiency of translation by recycling ribosomes from one round of translation to another. The protein is Ribosome-recycling factor of Prochlorococcus marinus (strain MIT 9313).